The following is a 327-amino-acid chain: GMP reductase (327 aa).

Cysteine 176 functions as the Thioimidate intermediate in the catalytic mechanism. An NADP(+)-binding site is contributed by 205-228 (IIADGGIRTHGDIAKSIRFGASMV).

Belongs to the IMPDH/GMPR family. GuaC type 2 subfamily.

It catalyses the reaction IMP + NH4(+) + NADP(+) = GMP + NADPH + 2 H(+). Functionally, catalyzes the irreversible NADPH-dependent deamination of GMP to IMP. It functions in the conversion of nucleobase, nucleoside and nucleotide derivatives of G to A nucleotides, and in maintaining the intracellular balance of A and G nucleotides. This chain is GMP reductase, found in Streptococcus suis (strain 05ZYH33).